The sequence spans 282 residues: MEMO1 family protein Msed_2139 (282 aa).

This sequence belongs to the MEMO1 family.

The protein is MEMO1 family protein Msed_2139 of Metallosphaera sedula (strain ATCC 51363 / DSM 5348 / JCM 9185 / NBRC 15509 / TH2).